The following is a 159-amino-acid chain: Ribosomal RNA large subunit methyltransferase H (159 aa).

S-adenosyl-L-methionine-binding positions include Gly-108 and 127–132 (FGPMTF).

Belongs to the RNA methyltransferase RlmH family. As to quaternary structure, homodimer.

The protein localises to the cytoplasm. It carries out the reaction pseudouridine(1915) in 23S rRNA + S-adenosyl-L-methionine = N(3)-methylpseudouridine(1915) in 23S rRNA + S-adenosyl-L-homocysteine + H(+). In terms of biological role, specifically methylates the pseudouridine at position 1915 (m3Psi1915) in 23S rRNA. This Magnetococcus marinus (strain ATCC BAA-1437 / JCM 17883 / MC-1) protein is Ribosomal RNA large subunit methyltransferase H.